The primary structure comprises 218 residues: Enhancer of split M2 protein (218 aa).

The segment covering 1 to 25 (MYLDTKNLTASSTSALTAATASNSK) has biased composition (low complexity). Disordered stretches follow at residues 1-30 (MYLD…TRRM), 64-86 (NTQQ…KSTP), and 137-164 (GRNC…SSSA). A compositionally biased stretch (low complexity) spans 147 to 163 (SSNINSSSSSSNMNSSS).

Its function is as follows. Part of the Notch signaling pathway. The protein is Enhancer of split M2 protein of Drosophila melanogaster (Fruit fly).